The sequence spans 610 residues: Elongation factor 4 (610 aa).

The 183-residue stretch at 11 to 193 folds into the tr-type G domain; sequence QRIRNFSIVA…KIVQDIPAPT (183 aa). GTP contacts are provided by residues 23–28 and 140–143; these read DHGKST and NKVD.

Belongs to the TRAFAC class translation factor GTPase superfamily. Classic translation factor GTPase family. LepA subfamily.

It is found in the cell membrane. The catalysed reaction is GTP + H2O = GDP + phosphate + H(+). Its function is as follows. Required for accurate and efficient protein synthesis under certain stress conditions. May act as a fidelity factor of the translation reaction, by catalyzing a one-codon backward translocation of tRNAs on improperly translocated ribosomes. Back-translocation proceeds from a post-translocation (POST) complex to a pre-translocation (PRE) complex, thus giving elongation factor G a second chance to translocate the tRNAs correctly. Binds to ribosomes in a GTP-dependent manner. The protein is Elongation factor 4 of Limosilactobacillus fermentum (strain NBRC 3956 / LMG 18251) (Lactobacillus fermentum).